Reading from the N-terminus, the 338-residue chain is Holliday junction branch migration complex subunit RuvB (338 aa).

A large ATPase domain (RuvB-L) region spans residues 1 to 181; sequence MEERILTQNF…FGVINRLDYY (181 aa). ATP is bound by residues leucine 20, arginine 21, glycine 62, lysine 65, threonine 66, threonine 67, 128-130, arginine 171, tyrosine 181, and arginine 218; that span reads EDF. Threonine 66 lines the Mg(2+) pocket. The small ATPAse domain (RuvB-S) stretch occupies residues 182-252; that stretch reads SVEELKEIIK…TSKEALDVLG (71 aa). The segment at 255–338 is head domain (RuvB-H); that stretch reads EIGLEYIDRK…YIEQGRIEGV (84 aa). DNA is bound by residues arginine 310 and arginine 315.

Belongs to the RuvB family. Homohexamer. Forms an RuvA(8)-RuvB(12)-Holliday junction (HJ) complex. HJ DNA is sandwiched between 2 RuvA tetramers; dsDNA enters through RuvA and exits via RuvB. An RuvB hexamer assembles on each DNA strand where it exits the tetramer. Each RuvB hexamer is contacted by two RuvA subunits (via domain III) on 2 adjacent RuvB subunits; this complex drives branch migration. In the full resolvosome a probable DNA-RuvA(4)-RuvB(12)-RuvC(2) complex forms which resolves the HJ.

It is found in the cytoplasm. The catalysed reaction is ATP + H2O = ADP + phosphate + H(+). Its function is as follows. The RuvA-RuvB-RuvC complex processes Holliday junction (HJ) DNA during genetic recombination and DNA repair, while the RuvA-RuvB complex plays an important role in the rescue of blocked DNA replication forks via replication fork reversal (RFR). RuvA specifically binds to HJ cruciform DNA, conferring on it an open structure. The RuvB hexamer acts as an ATP-dependent pump, pulling dsDNA into and through the RuvAB complex. RuvB forms 2 homohexamers on either side of HJ DNA bound by 1 or 2 RuvA tetramers; 4 subunits per hexamer contact DNA at a time. Coordinated motions by a converter formed by DNA-disengaged RuvB subunits stimulates ATP hydrolysis and nucleotide exchange. Immobilization of the converter enables RuvB to convert the ATP-contained energy into a lever motion, pulling 2 nucleotides of DNA out of the RuvA tetramer per ATP hydrolyzed, thus driving DNA branch migration. The RuvB motors rotate together with the DNA substrate, which together with the progressing nucleotide cycle form the mechanistic basis for DNA recombination by continuous HJ branch migration. Branch migration allows RuvC to scan DNA until it finds its consensus sequence, where it cleaves and resolves cruciform DNA. This chain is Holliday junction branch migration complex subunit RuvB, found in Thermoanaerobacter pseudethanolicus (strain ATCC 33223 / 39E) (Clostridium thermohydrosulfuricum).